Consider the following 642-residue polypeptide: Triacylglycerol lipase 3 (642 aa).

Residues 204 to 392 form the PNPLA domain; that stretch reads LILQGGSLFG…NEIEPFLNIN (189 aa). Positions 235–239 match the GXSXG motif; it reads GSSMG. The Nucleophile role is filled by S237. An HXXXXD acyltransferase motif motif is present at residues 298–303; that stretch reads HGYSQD. E403 (proton acceptor) is an active-site residue. The segment covering 471-481 has biased composition (polar residues); that stretch reads RKTQRSSSQSP. A disordered region spans residues 471-502; that stretch reads RKTQRSSSQSPIKAGTVEDLEPEPLMSPVPPS.

It localises to the lipid droplet. The catalysed reaction is a triacylglycerol + H2O = a diacylglycerol + a fatty acid + H(+). It catalyses the reaction 1,2,3-tri-(9Z-octadecenoyl)-glycerol + H2O = di-(9Z)-octadecenoylglycerol + (9Z)-octadecenoate + H(+). The enzyme catalyses di-(9Z)-octadecenoylglycerol + H2O = (9Z-octadecenoyl)-glycerol + (9Z)-octadecenoate + H(+). It carries out the reaction a 1-acyl-sn-glycero-3-phosphoethanolamine + (9Z)-octadecenoyl-CoA = 1-acyl-2-(9Z)-octadecenoyl-sn-glycero-3-phosphoethanolamine + CoA. The catalysed reaction is a 1-acyl-sn-glycero-3-phosphoethanolamine + hexadecanoyl-CoA = 1-acyl-2-hexadecanoyl-sn-glycero-3-phosphoethanolamine + CoA. Its activity is regulated as follows. Loses its lipolytic activity in cells lacking nonpolar lipids. Functionally, lipid particle-localized triacylglycerol (TAG) lipase. The lipid droplet/particle is a lipid storage compartment which serves as a depot of energy and building blocks for membrane lipid biosynthesis. Involved in the mobilization of the non-polar storage lipids triacylglycerols (TAGs) from lipid particles by hydrolysis of TAGs, releasing and supplying specific fatty acids to the appropriate metabolic pathways. Also catalyzes the acylation of lysophosphatidic acid (LPA). Important for efficient sporulation, but rather through its acyltransferase than lipase activity. The sequence is that of Triacylglycerol lipase 3 (TGL3) from Saccharomyces cerevisiae (strain ATCC 204508 / S288c) (Baker's yeast).